The primary structure comprises 708 residues: Chaperonin-containing T-complex member BBS12 (708 aa).

It belongs to the TCP-1 chaperonin family. BBS12 subfamily. In terms of assembly, component of the chaperonin-containing T-complex (TRiC), a heterooligomeric complex of about 850 to 900 kDa that forms two stacked rings, 12 to 16 nm in diameter. Interacts with MKKS.

Its subcellular location is the cell projection. It localises to the cilium. Component of the chaperonin-containing T-complex (TRiC), a molecular chaperone complex that assists the folding of proteins upon ATP hydrolysis. As part of the TRiC complex may play a role in the assembly of BBSome, a complex involved in ciliogenesis regulating transports vesicles to the cilia. Involved in adipogenic differentiation. This chain is Chaperonin-containing T-complex member BBS12 (Bbs12), found in Mus musculus (Mouse).